The chain runs to 187 residues: UPF0167 protein MT2352 (187 aa).

It belongs to the UPF0167 family.

This chain is UPF0167 protein MT2352, found in Mycobacterium tuberculosis (strain CDC 1551 / Oshkosh).